The chain runs to 235 residues: MAAAPDLSALEARIGHRFSAADLIEAALTHVSAAQGKRVSYQRLEFLGDRVLGVVVANMLYGAFPDADEGELSRRLADLVRKESCAEVALEWGVEAYVRVGESEKQNASVNRAILGDVCESIIGAVFLDGGFAPAQRVVTQAFEPRMRSPRRPLRDPKTTLQEWAQARGLPPPSYRETARTGPDHAPEFTISVEIAGFQQAEARGFAKRLAEQAAAAAFLTREKIVEPGDRKGAA.

An RNase III domain is found at 7–131 (LSALEARIGH…IIGAVFLDGG (125 aa)). E45 contacts Mg(2+). The active site involves D49. Mg(2+) contacts are provided by D117 and E120. The active site involves E120. The DRBM domain maps to 156 to 225 (DPKTTLQEWA…AAAFLTREKI (70 aa)).

This sequence belongs to the ribonuclease III family. Homodimer. Mg(2+) serves as cofactor.

Its subcellular location is the cytoplasm. It catalyses the reaction Endonucleolytic cleavage to 5'-phosphomonoester.. Its function is as follows. Digests double-stranded RNA. Involved in the processing of primary rRNA transcript to yield the immediate precursors to the large and small rRNAs (23S and 16S). Processes some mRNAs, and tRNAs when they are encoded in the rRNA operon. Processes pre-crRNA and tracrRNA of type II CRISPR loci if present in the organism. This Methylocella silvestris (strain DSM 15510 / CIP 108128 / LMG 27833 / NCIMB 13906 / BL2) protein is Ribonuclease 3.